The chain runs to 87 residues: NADH dehydrogenase [ubiquinone] 1 alpha subcomplex subunit 4-like 2 (87 aa).

The protein belongs to the complex I NDUFA4 subunit family.

The polypeptide is NADH dehydrogenase [ubiquinone] 1 alpha subcomplex subunit 4-like 2 (Ndufa4l2) (Mus musculus (Mouse)).